The primary structure comprises 431 residues: Tol-Pal system protein TolB (431 aa).

The first 18 residues, 1-18 (MKALLLSLLLLLPVVALA), serve as a signal peptide directing secretion. The disordered stretch occupies residues 410–431 (LPLRTEKGTYQTPDWSPLPQAQ).

It belongs to the TolB family. As to quaternary structure, the Tol-Pal system is composed of five core proteins: the inner membrane proteins TolA, TolQ and TolR, the periplasmic protein TolB and the outer membrane protein Pal. They form a network linking the inner and outer membranes and the peptidoglycan layer.

The protein resides in the periplasm. In terms of biological role, part of the Tol-Pal system, which plays a role in outer membrane invagination during cell division and is important for maintaining outer membrane integrity. The protein is Tol-Pal system protein TolB of Myxococcus xanthus.